We begin with the raw amino-acid sequence, 192 residues long: Ubiquitin-conjugating enzyme E2 1 (192 aa).

The interval 1–28 (MTTPSRRRLMRDFKKLQEDPPAGVSGAP) is disordered. The UBC core domain maps to 4 to 150 (PSRRRLMRDF…VQQIVEQSWL (147 aa)). C88 (glycyl thioester intermediate) is an active-site residue. Residues 171-192 (AAPGANDADDDRMDEGASGSNA) are disordered.

This sequence belongs to the ubiquitin-conjugating enzyme family. As to quaternary structure, interacts with ubr-1 and rfp-1. Interacts with ubc-13.

The catalysed reaction is S-ubiquitinyl-[E1 ubiquitin-activating enzyme]-L-cysteine + [E2 ubiquitin-conjugating enzyme]-L-cysteine = [E1 ubiquitin-activating enzyme]-L-cysteine + S-ubiquitinyl-[E2 ubiquitin-conjugating enzyme]-L-cysteine.. It functions in the pathway protein modification; protein ubiquitination. Functionally, catalyzes the covalent attachment of ubiquitin to other proteins. This is Ubiquitin-conjugating enzyme E2 1 (ubc-1) from Caenorhabditis elegans.